Here is a 311-residue protein sequence, read N- to C-terminus: Aspartate carbamoyltransferase catalytic subunit (311 aa).

Carbamoyl phosphate-binding residues include Arg57 and Thr58. Lys86 provides a ligand contact to L-aspartate. Residues Arg107, His135, and Gln138 each coordinate carbamoyl phosphate. L-aspartate-binding residues include Arg168 and Arg230. 2 residues coordinate carbamoyl phosphate: Leu269 and Pro270.

This sequence belongs to the aspartate/ornithine carbamoyltransferase superfamily. ATCase family. As to quaternary structure, heterooligomer of catalytic and regulatory chains.

The catalysed reaction is carbamoyl phosphate + L-aspartate = N-carbamoyl-L-aspartate + phosphate + H(+). It participates in pyrimidine metabolism; UMP biosynthesis via de novo pathway; (S)-dihydroorotate from bicarbonate: step 2/3. Catalyzes the condensation of carbamoyl phosphate and aspartate to form carbamoyl aspartate and inorganic phosphate, the committed step in the de novo pyrimidine nucleotide biosynthesis pathway. The sequence is that of Aspartate carbamoyltransferase catalytic subunit from Staphylothermus marinus (strain ATCC 43588 / DSM 3639 / JCM 9404 / F1).